A 189-amino-acid chain; its full sequence is Notch ligand osm-11 (189 aa).

Residues 1–18 (MNFITVAALAIVMVLAQA) form the signal peptide.

As to quaternary structure, may interact with lin-12/Notch receptor. As to expression, expressed in coelomocytes (at protein level).

It is found in the apical cell membrane. Functionally, probable secreted lin-12/Notch ligand or co-ligand involved in the mediation of Notch signaling. Involved in the lin-12/Notch pathway signaling of cell fate in vulval precursor cells (VPCs), acting redundantly with dsl-1 and lag-2. Required for normal octanol avoidance response, acting via both lin-12/Notch and glp-1/Notch signaling pathways in neurons, in concert with lag-2. Involved in regulation of sleep-like quiescence during the larval to adult transition, acting via Notch receptor activation and in parallel with EGF signaling. The polypeptide is Notch ligand osm-11 (Caenorhabditis elegans).